We begin with the raw amino-acid sequence, 269 residues long: Type II methyltransferase M2.LlaDCHI (269 aa).

The protein belongs to the N(4)/N(6)-methyltransferase family.

It catalyses the reaction a 2'-deoxyadenosine in DNA + S-adenosyl-L-methionine = an N(6)-methyl-2'-deoxyadenosine in DNA + S-adenosyl-L-homocysteine + H(+). A beta subtype methylase, recognizes the double-stranded sequence 5'-GATC-3', methylates A-2 on both strands, and protects the DNA from cleavage by the LlaDCHI endonuclease. In Lactococcus lactis subsp. cremoris (Streptococcus cremoris), this protein is Type II methyltransferase M2.LlaDCHI.